The chain runs to 80 residues: Small, acid-soluble spore protein Tlp (80 aa).

It belongs to the Tlp family.

Its subcellular location is the spore core. The protein is Small, acid-soluble spore protein Tlp of Bacillus pumilus (strain SAFR-032).